Here is a 913-residue protein sequence, read N- to C-terminus: Eukaryotic translation initiation factor 3 subunit C (913 aa).

The interval 1–44 (MSRFFTTGSDSESESSLSGEELVTKPVGGNYGKQPLLLSEDEED) is disordered. Low complexity predominate over residues 8-21 (GSDSESESSLSGEE). Residues Ser-9, Ser-11, Ser-13, Ser-15, Ser-16, Ser-18, and Ser-39 each carry the phosphoserine modification. Lys-99 bears the N6-acetyllysine mark. Disordered regions lie at residues 157–301 (TSYK…GGEW) and 522–542 (QLTPPEGSSKSEQDQAENEGE). Phosphoserine occurs at positions 166, 178, 181, and 182. The segment covering 166–190 (SADEDAEKNEEDSEGSSDEDEDEDG) has biased composition (acidic residues). The span at 199–216 (KKSEAPSGESRKFLKKMD) shows a compositional bias: basic and acidic residues. Acidic residues predominate over residues 217–232 (DEDEDSEDSEDDEDWD). The segment covering 261–278 (PTTDEDKKAAEKKREDKA) has biased composition (basic and acidic residues). Residues 522 to 531 (QLTPPEGSSK) are compositionally biased toward polar residues. Thr-524 bears the Phosphothreonine mark. N6-acetyllysine is present on Lys-643. Residues 673–849 (FHLHINLELL…QTVVMHRTEP (177 aa)) form the PCI domain. A disordered region spans residues 885–913 (FRDQKDGYRKNEGYMRRGGYRQQQSQTAY). Basic and acidic residues predominate over residues 886–899 (RDQKDGYRKNEGYM). A Phosphoserine modification is found at Ser-909.

Component of the eukaryotic translation initiation factor 3 (eIF-3) complex, which is composed of 13 subunits: EIF3A, EIF3B, EIF3C, EIF3D, EIF3E, EIF3F, EIF3G, EIF3H, EIF3I, EIF3J, EIF3K, EIF3L and EIF3M. The eIF-3 complex appears to include 3 stable modules: module A is composed of EIF3A, EIF3B, EIF3G and EIF3I; module B is composed of EIF3F, EIF3H, and EIF3M; and module C is composed of EIF3C, EIF3D, EIF3E, EIF3K and EIF3L. EIF3C of module C binds EIF3B of module A and EIF3H of module B, thereby linking the three modules. EIF3J is a labile subunit that binds to the eIF-3 complex via EIF3B. The eIF-3 complex interacts with RPS6KB1 under conditions of nutrient depletion. Mitogenic stimulation leads to binding and activation of a complex composed of MTOR and RPTOR, leading to phosphorylation and release of RPS6KB1 and binding of EIF4B to eIF-3. Identified in a HCV IRES-mediated translation complex, at least composed of EIF3C, IGF2BP1, RPS3 and HCV RNA-replicon. Interacts with ALKBH4, IFIT1 and IFIT2. Interacts with BZW2/5MP1. Post-translationally, phosphorylated. Phosphorylation is enhanced upon serum stimulation.

It localises to the cytoplasm. Functionally, component of the eukaryotic translation initiation factor 3 (eIF-3) complex, which is required for several steps in the initiation of protein synthesis. The eIF-3 complex associates with the 40S ribosome and facilitates the recruitment of eIF-1, eIF-1A, eIF-2:GTP:methionyl-tRNAi and eIF-5 to form the 43S pre-initiation complex (43S PIC). The eIF-3 complex stimulates mRNA recruitment to the 43S PIC and scanning of the mRNA for AUG recognition. The eIF-3 complex is also required for disassembly and recycling of post-termination ribosomal complexes and subsequently prevents premature joining of the 40S and 60S ribosomal subunits prior to initiation. The eIF-3 complex specifically targets and initiates translation of a subset of mRNAs involved in cell proliferation, including cell cycling, differentiation and apoptosis, and uses different modes of RNA stem-loop binding to exert either translational activation or repression. The polypeptide is Eukaryotic translation initiation factor 3 subunit C (Homo sapiens (Human)).